A 573-amino-acid polypeptide reads, in one-letter code: Formate--tetrahydrofolate ligase 3 (573 aa).

66–73 (TPLGEGKT) contacts ATP.

This sequence belongs to the formate--tetrahydrofolate ligase family.

It carries out the reaction (6S)-5,6,7,8-tetrahydrofolate + formate + ATP = (6R)-10-formyltetrahydrofolate + ADP + phosphate. It functions in the pathway one-carbon metabolism; tetrahydrofolate interconversion. This chain is Formate--tetrahydrofolate ligase 3, found in Rubrobacter xylanophilus (strain DSM 9941 / JCM 11954 / NBRC 16129 / PRD-1).